The following is a 1010-amino-acid chain: Glycine--tRNA ligase (1010 aa).

Residues 1 to 312 form a glycine--tRNA ligase alpha subunit region; that stretch reads MSEHPLTLQS…TSESVVPMIS (312 aa). The segment at 313–1010 is glycine--tRNA ligase beta subunit; it reads STEDLLLEIG…SLCHWESVAV (698 aa).

Belongs to the class-II aminoacyl-tRNA synthetase family.

Its subcellular location is the cytoplasm. It carries out the reaction tRNA(Gly) + glycine + ATP = glycyl-tRNA(Gly) + AMP + diphosphate. This is Glycine--tRNA ligase (glyQS) from Chlamydia pneumoniae (Chlamydophila pneumoniae).